The primary structure comprises 178 residues: Probable inosine/xanthosine triphosphatase (178 aa).

Belongs to the YjjX NTPase family. In terms of assembly, homodimer. Requires Mg(2+) as cofactor. Mn(2+) serves as cofactor.

The enzyme catalyses XTP + H2O = XDP + phosphate + H(+). The catalysed reaction is ITP + H2O = IDP + phosphate + H(+). Functionally, phosphatase that hydrolyzes non-canonical purine nucleotides such as XTP and ITP to their respective diphosphate derivatives. Probably excludes non-canonical purines from DNA/RNA precursor pool, thus preventing their incorporation into DNA/RNA and avoiding chromosomal lesions. The chain is Probable inosine/xanthosine triphosphatase from Pyrobaculum aerophilum (strain ATCC 51768 / DSM 7523 / JCM 9630 / CIP 104966 / NBRC 100827 / IM2).